We begin with the raw amino-acid sequence, 353 residues long: uncharacterized protein (353 aa).

Belongs to the MG067/MG068/MG395 family.

This is an uncharacterized protein from Mycoplasma pneumoniae (strain ATCC 29342 / M129 / Subtype 1) (Mycoplasmoides pneumoniae).